A 395-amino-acid chain; its full sequence is Putative nickel insertion protein (395 aa).

Belongs to the LarC family.

In Methanopyrus kandleri (strain AV19 / DSM 6324 / JCM 9639 / NBRC 100938), this protein is Putative nickel insertion protein.